Consider the following 129-residue polypeptide: MAKAPVCARKRVRKQVSDGVAHIHASFNNTIVTITDRQGNALGWATAGGSGFRGSRKSTPFAAQVAAERCADAVKEYGIKNLEVMVKGPGPGRESTIRALNAAGFRITNITDVTPIPHNGCRPPKKRRV.

Belongs to the universal ribosomal protein uS11 family. In terms of assembly, part of the 30S ribosomal subunit. Interacts with proteins S7 and S18. Binds to IF-3.

Located on the platform of the 30S subunit, it bridges several disparate RNA helices of the 16S rRNA. Forms part of the Shine-Dalgarno cleft in the 70S ribosome. The sequence is that of Small ribosomal subunit protein uS11 from Salmonella typhi.